Reading from the N-terminus, the 312-residue chain is Beta-lactamase regulatory protein BlaB (312 aa).

The chain is Beta-lactamase regulatory protein BlaB (blaB) from Streptomyces cacaoi.